We begin with the raw amino-acid sequence, 386 residues long: Cytochrome b (386 aa).

The next 4 membrane-spanning stretches (helical) occupy residues 32–52 (FGSL…TLAM), 76–98 (WLIR…LHMG), 113–133 (TWNI…LGYV), and 179–199 (FFSL…MHLI). His-82 and His-96 together coordinate heme b. Residues His-183 and His-197 each coordinate heme b. His-202 is an a ubiquinone binding site. The next 4 membrane-spanning stretches (helical) occupy residues 226–246 (FLFK…IFVL), 290–310 (TLGV…PYLD), 322–342 (LSKI…ILGA), and 349–369 (FIIF…IITP).

The protein belongs to the cytochrome b family. Fungal cytochrome b-c1 complex contains 10 subunits; 3 respiratory subunits, 2 core proteins and 5 low-molecular weight proteins. Cytochrome b-c1 complex is a homodimer. Heme b serves as cofactor.

Its subcellular location is the mitochondrion inner membrane. Its function is as follows. Component of the ubiquinol-cytochrome c reductase complex (complex III or cytochrome b-c1 complex) that is part of the mitochondrial respiratory chain. The b-c1 complex mediates electron transfer from ubiquinol to cytochrome c. Contributes to the generation of a proton gradient across the mitochondrial membrane that is then used for ATP synthesis. The sequence is that of Cytochrome b (COB) from Trichophyton rubrum (Athlete's foot fungus).